Here is a 171-residue protein sequence, read N- to C-terminus: MAEKRNIFLVGPMGAGKSTIGRHLAQMLHLEFHDSDQEIEQRTGADIAWVFDVEGEEGFRRREAQVIADLSEKQGIVLATGGGSVQSKDIRNHLSARGIVVYLETTIDKQVARTQRDKRRPLLQVDDPREVLENLAEIRNPLYEEIADVIVKTDDQSAKVVANQIIEKLGF.

14 to 19 (GAGKST) contributes to the ATP binding site. Position 18 (S18) interacts with Mg(2+). The substrate site is built by D36, R60, and G82. R120 lines the ATP pocket. Substrate is bound at residue R139. Q156 serves as a coordination point for ATP.

Belongs to the shikimate kinase family. As to quaternary structure, monomer. It depends on Mg(2+) as a cofactor.

It is found in the cytoplasm. It carries out the reaction shikimate + ATP = 3-phosphoshikimate + ADP + H(+). The protein operates within metabolic intermediate biosynthesis; chorismate biosynthesis; chorismate from D-erythrose 4-phosphate and phosphoenolpyruvate: step 5/7. Its function is as follows. Catalyzes the specific phosphorylation of the 3-hydroxyl group of shikimic acid using ATP as a cosubstrate. This chain is Shikimate kinase, found in Shewanella sp. (strain MR-4).